We begin with the raw amino-acid sequence, 338 residues long: Bifunctional methylenetetrahydrofolate dehydrogenase/cyclohydrolase 2, mitochondrial (338 aa).

Substrate contacts are provided by residues 89–93 (YVRNK) and 136–138 (VQL). Residues 205–207 (GRS) and Arg238 each bind NAD(+). A substrate-binding site is contributed by 314–318 (PGGVG).

This sequence belongs to the tetrahydrofolate dehydrogenase/cyclohydrolase family. Mg(2+) is required as a cofactor. Widely expressed.

The protein localises to the mitochondrion inner membrane. It catalyses the reaction (6R)-5,10-methylene-5,6,7,8-tetrahydrofolate + NADP(+) = (6R)-5,10-methenyltetrahydrofolate + NADPH. The catalysed reaction is (6R)-5,10-methylene-5,6,7,8-tetrahydrofolate + NAD(+) = (6R)-5,10-methenyltetrahydrofolate + NADH. It carries out the reaction (6R)-5,10-methenyltetrahydrofolate + H2O = (6R)-10-formyltetrahydrofolate + H(+). The protein operates within one-carbon metabolism; tetrahydrofolate interconversion. Bifunctional mitochondrial folate-interconverting enzyme that has both NAD/NADP-dependent methylenetetrahydrofolate dehydrogenase and methenyltetrahydrofolate cyclohydrolase activities. Its function is as follows. Has no NAD/NADP-dependent methylenetetrahydrofolate dehydrogenase activity. This Rattus norvegicus (Rat) protein is Bifunctional methylenetetrahydrofolate dehydrogenase/cyclohydrolase 2, mitochondrial.